A 421-amino-acid polypeptide reads, in one-letter code: ATP-dependent RNA helicase RhlB (421 aa).

The Q motif signature appears at 9–37 (QKFSDFALHPKVVEALEKKGFHNCTPIQA). Residues 40–219 (LPLTLAGRDV…FEQMNNAEYI (180 aa)) form the Helicase ATP-binding domain. 53 to 60 (AQTGTGKT) is a binding site for ATP. The DEAD box signature appears at 165–168 (DEAD). Residues 245-390 (RLLQTLIEEE…VSKYNPDALM (146 aa)) enclose the Helicase C-terminal domain. A disordered region spans residues 392–421 (DLPKPLRLTRPRTGNGPRRTGTPRNRRRSG). A compositionally biased stretch (low complexity) spans 402–414 (PRTGNGPRRTGTP).

The protein belongs to the DEAD box helicase family. RhlB subfamily. In terms of assembly, component of the RNA degradosome, which is a multiprotein complex involved in RNA processing and mRNA degradation.

Its subcellular location is the cytoplasm. The catalysed reaction is ATP + H2O = ADP + phosphate + H(+). In terms of biological role, DEAD-box RNA helicase involved in RNA degradation. Has RNA-dependent ATPase activity and unwinds double-stranded RNA. The sequence is that of ATP-dependent RNA helicase RhlB from Escherichia coli O7:K1 (strain IAI39 / ExPEC).